A 447-amino-acid polypeptide reads, in one-letter code: Phosphoglucosamine mutase (447 aa).

The Phosphoserine intermediate role is filled by Ser102. Residues Ser102, Asp241, Asp243, and Asp245 each coordinate Mg(2+). Ser102 carries the post-translational modification Phosphoserine.

This sequence belongs to the phosphohexose mutase family. Mg(2+) serves as cofactor. Activated by phosphorylation.

It carries out the reaction alpha-D-glucosamine 1-phosphate = D-glucosamine 6-phosphate. Catalyzes the conversion of glucosamine-6-phosphate to glucosamine-1-phosphate. The protein is Phosphoglucosamine mutase of Symbiobacterium thermophilum (strain DSM 24528 / JCM 14929 / IAM 14863 / T).